Reading from the N-terminus, the 89-residue chain is Bacterial microcompartment shell vertex protein GrpN (89 aa).

Residues 1 to 83 (MYLGKVIGTV…IDAAVVGIVD (83 aa)) enclose the BMV domain.

This sequence belongs to the CcmL/EutN family. In terms of assembly, homopentamer with a small central pore.

The protein resides in the bacterial microcompartment. Functionally, probably forms vertices in the bacterial microcompartment (BMC) predicted to be involved in glycyl radical-based 1,2-propanediol metabolism in this organism. The protein is Bacterial microcompartment shell vertex protein GrpN of Rhodospirillum rubrum (strain F11).